The following is a 208-amino-acid chain: Large ribosomal subunit protein uL3 (208 aa).

Belongs to the universal ribosomal protein uL3 family. In terms of assembly, part of the 50S ribosomal subunit. Forms a cluster with proteins L14 and L19.

Functionally, one of the primary rRNA binding proteins, it binds directly near the 3'-end of the 23S rRNA, where it nucleates assembly of the 50S subunit. The sequence is that of Large ribosomal subunit protein uL3 from Desulfosudis oleivorans (strain DSM 6200 / JCM 39069 / Hxd3) (Desulfococcus oleovorans).